The following is a 364-amino-acid chain: S-adenosylmethionine:tRNA ribosyltransferase-isomerase (364 aa).

Residues 344-364 (ASDKMQETSGRGERPRFDHEI) are disordered.

This sequence belongs to the QueA family. In terms of assembly, monomer.

It localises to the cytoplasm. The catalysed reaction is 7-aminomethyl-7-carbaguanosine(34) in tRNA + S-adenosyl-L-methionine = epoxyqueuosine(34) in tRNA + adenine + L-methionine + 2 H(+). The protein operates within tRNA modification; tRNA-queuosine biosynthesis. Transfers and isomerizes the ribose moiety from AdoMet to the 7-aminomethyl group of 7-deazaguanine (preQ1-tRNA) to give epoxyqueuosine (oQ-tRNA). The protein is S-adenosylmethionine:tRNA ribosyltransferase-isomerase of Thioalkalivibrio sulfidiphilus (strain HL-EbGR7).